Consider the following 110-residue polypeptide: METVAYADFARLEMRVGKIVEVKRHENADKLYIVQVDVGQKTLQTVTSLVPYYSEEELMGKTVVVLCNLQKAKMRGETSECMLLCAETDDGSESVLLTPERMMPAGVRVV.

The tRNA-binding domain occupies 8-110 (DFARLEMRVG…RMMPAGVRVV (103 aa)).

As to quaternary structure, homodimer.

The sequence is that of tRNA-binding protein YgjH (ygjH) from Escherichia coli (strain K12).